The sequence spans 644 residues: MVTALSDVNNTDNYGAGQIQVLEGLEAARKRPGMYIGSTSERGLHHLVWEIVDNSIDEALAGYANQIEVVIEKDNWIKVTDNGRGIPVDIQEKMGRPAVEVILTVLHAGGKFGGGGYKVSGGLHGVGSSVVNALSQDLEVYVHRNETIYHQAYKKGVPQFDLKEVGTTDKTGTVIRFKADGEIFTETTVYNYETLQQRIRELAFLNKGIQITLRDERDEENVREDSYHYEGGIKSYVELLNENKEPIHDEPIYIHQSKDDIEVEIAIQYNSGYATNLLTYANNIHTYEGGTHEDGFKRALTRVLNSYGLSSKIMKEEKDRLSGEDTREGMTAIISIKHGDPQFEGQTKTKLGNSEVRQVVDKLFSEHFERFLYENPQVARTVVEKGIMAARARVAAKKAREVTRRKSALDVASLPGKLADCSSKSPEECEIFLVEGDSAGGSTKSGRDSRTQAILPLRGKILNVEKARLDRILNNNEIRQMITAFGTGIGGDFDLAKARYHKIVIMTDADVDGAHIRTLLLTFFYRFMRPLIEAGYVYIAQPPLYKLTQGKQKYYVYNDRELDKLKSELNPTPKWSIARYKGLGEMNADQLWETTMNPEHRALLQVKLEDAIEADQTFEMLMGDVVENRRQFIEDNAVYANLDF.

Residues 429 to 543 (CEIFLVEGDS…AGYVYIAQPP (115 aa)) form the Toprim domain. Residues Glu435, Asp508, and Asp510 each coordinate Mg(2+).

It belongs to the type II topoisomerase GyrB family. In terms of assembly, heterotetramer, composed of two GyrA and two GyrB chains. In the heterotetramer, GyrA contains the active site tyrosine that forms a transient covalent intermediate with DNA, while GyrB binds cofactors and catalyzes ATP hydrolysis. Mg(2+) is required as a cofactor. Mn(2+) serves as cofactor. The cofactor is Ca(2+).

The protein resides in the cytoplasm. It carries out the reaction ATP-dependent breakage, passage and rejoining of double-stranded DNA.. In terms of biological role, a type II topoisomerase that negatively supercoils closed circular double-stranded (ds) DNA in an ATP-dependent manner to modulate DNA topology and maintain chromosomes in an underwound state. Negative supercoiling favors strand separation, and DNA replication, transcription, recombination and repair, all of which involve strand separation. Also able to catalyze the interconversion of other topological isomers of dsDNA rings, including catenanes and knotted rings. Type II topoisomerases break and join 2 DNA strands simultaneously in an ATP-dependent manner. The chain is DNA gyrase subunit B from Staphylococcus aureus (strain COL).